The chain runs to 226 residues: UPF0758 protein PputW619_0186 (226 aa).

In terms of domain architecture, MPN spans 102 to 224 (ALESPSAVRR…PLSMVEQGWI (123 aa)). Residues histidine 173, histidine 175, and aspartate 186 each contribute to the Zn(2+) site. The JAMM motif signature appears at 173-186 (HNHPSGNSEPSQDD).

It belongs to the UPF0758 family.

The polypeptide is UPF0758 protein PputW619_0186 (Pseudomonas putida (strain W619)).